A 332-amino-acid polypeptide reads, in one-letter code: Ferredoxin--NADP reductase 2 (332 aa).

Residues E37, Q45, Y50, V90, F124, D285, and T326 each coordinate FAD.

It belongs to the ferredoxin--NADP reductase type 2 family. As to quaternary structure, homodimer. The cofactor is FAD.

It carries out the reaction 2 reduced [2Fe-2S]-[ferredoxin] + NADP(+) + H(+) = 2 oxidized [2Fe-2S]-[ferredoxin] + NADPH. The sequence is that of Ferredoxin--NADP reductase 2 (yumC) from Bacillus subtilis (strain 168).